The chain runs to 192 residues: Leucine-rich repeat-containing protein 51 (192 aa).

LRR repeat units follow at residues 49–71, 80–101, and 103–124; these read SLTQSLWLNNNVLNDLKDFNQVV, NLAWIDLSFNDLTTIDPVLTTF, and NLSVLYLHGNSIHRLGEVNKLA. The LRRCT domain maps to 137-175; it reads NPIEEEKGYRQYVLCNLPRITTFDFSGVTKADRSTAEVW.

Its subcellular location is the cytoplasm. The protein is Leucine-rich repeat-containing protein 51 of Rattus norvegicus (Rat).